The chain runs to 203 residues: Holliday junction branch migration complex subunit RuvA (203 aa).

Positions 1–64 (MIGRLRGTLA…EDAQLLYGFI (64 aa)) are domain I. Residues 65-143 (GKRDRDFFRE…AWEVVPSMFA (79 aa)) are domain II. Residues 144 to 154 (LVPNQPDMPAG) are flexible linker. The tract at residues 155–203 (QVASAESDAVSALISLGYKPQEASKAVSAIKDKNLSSEDMIRRALKGMI) is domain III.

Belongs to the RuvA family. Homotetramer. Forms an RuvA(8)-RuvB(12)-Holliday junction (HJ) complex. HJ DNA is sandwiched between 2 RuvA tetramers; dsDNA enters through RuvA and exits via RuvB. An RuvB hexamer assembles on each DNA strand where it exits the tetramer. Each RuvB hexamer is contacted by two RuvA subunits (via domain III) on 2 adjacent RuvB subunits; this complex drives branch migration. In the full resolvosome a probable DNA-RuvA(4)-RuvB(12)-RuvC(2) complex forms which resolves the HJ.

It localises to the cytoplasm. Functionally, the RuvA-RuvB-RuvC complex processes Holliday junction (HJ) DNA during genetic recombination and DNA repair, while the RuvA-RuvB complex plays an important role in the rescue of blocked DNA replication forks via replication fork reversal (RFR). RuvA specifically binds to HJ cruciform DNA, conferring on it an open structure. The RuvB hexamer acts as an ATP-dependent pump, pulling dsDNA into and through the RuvAB complex. HJ branch migration allows RuvC to scan DNA until it finds its consensus sequence, where it cleaves and resolves the cruciform DNA. This chain is Holliday junction branch migration complex subunit RuvA, found in Pseudomonas fluorescens (strain SBW25).